Here is a 79-residue protein sequence, read N- to C-terminus: Putative membrane protein insertion efficiency factor (79 aa).

The protein belongs to the UPF0161 family.

It is found in the cell inner membrane. Could be involved in insertion of integral membrane proteins into the membrane. The sequence is that of Putative membrane protein insertion efficiency factor from Thermotoga neapolitana (strain ATCC 49049 / DSM 4359 / NBRC 107923 / NS-E).